A 1126-amino-acid polypeptide reads, in one-letter code: NUT family member 1 (1126 aa).

Disordered regions lie at residues 1 to 56, 334 to 367, 475 to 515, 537 to 559, 664 to 692, 755 to 810, and 932 to 1014; these read MASD…PVFS, IPKK…IPPE, EDAQ…QGAA, QEQT…SPSS, AGML…DDRG, ALNS…GPGL, and GEGR…EELS. The segment covering 30–55 has biased composition (pro residues); that stretch reads FAPPPPVPPDQPLWEPSPQPPIPPVF. Over residues 338 to 353 the composition is skewed to basic residues; sequence AASKTRAPRRRQRKPQ. Positions 962 to 975 are enriched in polar residues; the sequence is KLTNGQGQGSTSPR. Phosphoserine is present on Ser973. The segment covering 987–1005 has biased composition (basic and acidic residues); the sequence is TPIKEKCTSADRAKRRETE. Residues Ser1022, Ser1025, and Ser1027 each carry the phosphoserine modification. Residues 1032-1126 form a disordered region; it reads PLSTRQASGG…SKRKKRRRSQ (95 aa). Gln1042 carries the N5-methylglutamine modification. Residues 1106 to 1126 are compositionally biased toward basic residues; the sequence is PRKRRRDGFVTSKRKKRRRSQ.

Belongs to the NUT family. Methylated at Gln-1042 by N6AMT1. Post-translationally, phosphorylation on Ser-1022, Ser-1025 or Ser-1027 is important for cytoplasmic export.

It localises to the cytoplasm. Its subcellular location is the nucleus. In terms of biological role, plays a role in the regulation of proliferation. Regulates TERT expression by modulating SP1 binding to TERT promoter binding sites. The sequence is that of NUT family member 1 from Mus musculus (Mouse).